Consider the following 143-residue polypeptide: 3-hydroxyacyl-[acyl-carrier-protein] dehydratase FabZ (143 aa).

Histidine 47 is a catalytic residue.

It belongs to the thioester dehydratase family. FabZ subfamily.

The protein resides in the cytoplasm. The enzyme catalyses a (3R)-hydroxyacyl-[ACP] = a (2E)-enoyl-[ACP] + H2O. Its function is as follows. Involved in unsaturated fatty acids biosynthesis. Catalyzes the dehydration of short chain beta-hydroxyacyl-ACPs and long chain saturated and unsaturated beta-hydroxyacyl-ACPs. The protein is 3-hydroxyacyl-[acyl-carrier-protein] dehydratase FabZ of Rickettsia canadensis (strain McKiel).